A 208-amino-acid chain; its full sequence is Redox-sensing transcriptional repressor Rex 1 (208 aa).

The segment at residues 15–54 (SYYMCLERLLDEGVEVVSSEELARRLDLKASQIRKDLSYF) is a DNA-binding region (H-T-H motif). NAD(+) is bound at residue 89 to 94 (GAGNIG).

It belongs to the transcriptional regulatory Rex family. As to quaternary structure, homodimer.

The protein localises to the cytoplasm. Functionally, modulates transcription in response to changes in cellular NADH/NAD(+) redox state. The protein is Redox-sensing transcriptional repressor Rex 1 of Thermotoga maritima (strain ATCC 43589 / DSM 3109 / JCM 10099 / NBRC 100826 / MSB8).